The sequence spans 507 residues: E3 SUMO-protein ligase PIAS4 (507 aa).

Residue Ala-2 is modified to N-acetylalanine. A Glycyl lysine isopeptide (Lys-Gly) (interchain with G-Cter in SUMO2) cross-link involves residue Lys-9. The SAP domain maps to 12 to 46 (VMSFRVSDLQMLLGFVGRSKSGLKHELVTRALQLV). An LXXLL motif motif is present at residues 20-24 (LQMLL). Lys-35 participates in a covalent cross-link: Glycyl lysine isopeptide (Lys-Gly) (interchain with G-Cter in SUMO); alternate. Lys-35 is covalently cross-linked (Glycyl lysine isopeptide (Lys-Gly) (interchain with G-Cter in SUMO2); alternate). Glycyl lysine isopeptide (Lys-Gly) (interchain with G-Cter in SUMO2) cross-links involve residues Lys-56, Lys-59, Lys-68, and Lys-69. Lys-107 bears the N6-acetyllysine mark. Residues 112–272 (LGRLPTKTLK…SVALYLVRQL (161 aa)) form the PINIT domain. Lys-118 is covalently cross-linked (Glycyl lysine isopeptide (Lys-Gly) (interchain with G-Cter in SUMO2)). Lys-128 participates in a covalent cross-link: Glycyl lysine isopeptide (Lys-Gly) (interchain with G-Cter in SUMO). Residues 304–385 (PDSEIATTGV…LSKILSECEG (82 aa)) form an SP-RING-type zinc finger. Positions 335, 337, 358, and 361 each coordinate Zn(2+). A disordered region spans residues 426–507 (APASSTPGIG…PFQKGLVPAC (82 aa)). Gly residues predominate over residues 434-450 (IGSGLSGPGSAGSGAGA). Residues 474–489 (SEDEDEDEDDDEDEDE) are compositionally biased toward acidic residues.

It belongs to the PIAS family. In terms of assembly, interacts with AR, GATA2, LEF1, TP53 and STAT1 (IFNG-induced). Interacts with TICAM1. Interacts with MTA1. Interacts with PRDM1/Blimp-1. Interacts with TRIM32 upon treatment with UVB and TNF-alpha. (Microbial infection) Interacts ewith Moloney murine leukemia virus Capsid protein p30. Sumoylated. Lys-35 is the main site of sumoylation. Sumoylation is required for TCF4 sumoylation and transcriptional activation. Represses LEF1 transcriptional activity. SUMO1 is the preferred conjugate. In terms of processing, ubiquitinated by TRIM32 upon treatment with UVB and TNF-alpha. Widely expressed, with highest levels in testis. Also expressed in vascular endothelial cells, in primary keratinocytes and in the CNS, including cortex, olfactory bulb, spinal cord, thalamus and trigeminal ganglion. Low expression, if any, in liver and lung.

Its subcellular location is the nucleus. It is found in the PML body. It catalyses the reaction S-ubiquitinyl-[E2 ubiquitin-conjugating enzyme]-L-cysteine + [acceptor protein]-L-lysine = [E2 ubiquitin-conjugating enzyme]-L-cysteine + N(6)-ubiquitinyl-[acceptor protein]-L-lysine.. It participates in protein modification; protein sumoylation. Its function is as follows. Functions as an E3-type small ubiquitin-like modifier (SUMO) ligase, stabilizing the interaction between UBE2I and the substrate, and as a SUMO-tethering factor. Mediates sumoylation of ALKBH5, AXIN1, CEBPA, KLF8, GATA2, PARK7, HERC2, MYB, TCF4 and RNF168. Plays a crucial role as a transcriptional coregulation in various cellular pathways, including the STAT pathway, the p53/TP53 pathway, the Wnt pathway and the steroid hormone signaling pathway. Involved in gene silencing. In Wnt signaling, represses LEF1 and enhances TCF4 transcriptional activities through promoting their sumoylations. Enhances the sumoylation of MTA1 and may participate in its paralog-selective sumoylation. Binds to AT-rich DNA sequences, known as matrix or scaffold attachment regions (MARs/SARs). Catalyzes conjugation of SUMO2 to KAT5 in response to DNA damage, facilitating repair of DNA double-strand breaks (DSBs) via homologous recombination (HR). Mediates sumoylation of PARP1 in response to PARP1 trapping to chromatin. Mediates sumoylation of KLF8, repressiing KLF8 transcriptional activity and cell cycle progression into G(1) phase. Sumoylates ALKBH5 downstream of MAPK8/JNK1 and MAPK9/JNK2 in response to reactive oxygen species (ROS), inhibiting ALKBH5 RNA demethylase activity. The protein is E3 SUMO-protein ligase PIAS4 (Pias4) of Mus musculus (Mouse).